Reading from the N-terminus, the 377-residue chain is DNA primase small subunit PriS (377 aa).

Active-site residues include Asp-99, Asp-101, and Asp-274.

It belongs to the eukaryotic-type primase small subunit family. Heterodimer of a small subunit (PriS) and a large subunit (PriL). Requires Mg(2+) as cofactor. The cofactor is Mn(2+).

Catalytic subunit of DNA primase, an RNA polymerase that catalyzes the synthesis of short RNA molecules used as primers for DNA polymerase during DNA replication. The small subunit contains the primase catalytic core and has DNA synthesis activity on its own. Binding to the large subunit stabilizes and modulates the activity, increasing the rate of DNA synthesis while decreasing the length of the DNA fragments, and conferring RNA synthesis capability. The DNA polymerase activity may enable DNA primase to also catalyze primer extension after primer synthesis. May also play a role in DNA repair. The chain is DNA primase small subunit PriS from Staphylothermus marinus (strain ATCC 43588 / DSM 3639 / JCM 9404 / F1).